The sequence spans 136 residues: Large ribosomal subunit protein bL19 (136 aa).

The protein belongs to the bacterial ribosomal protein bL19 family.

Its function is as follows. This protein is located at the 30S-50S ribosomal subunit interface and may play a role in the structure and function of the aminoacyl-tRNA binding site. This chain is Large ribosomal subunit protein bL19, found in Xylella fastidiosa (strain 9a5c).